A 295-amino-acid polypeptide reads, in one-letter code: Zinc finger CCCH domain-containing protein 44 (295 aa).

Residues 1 to 31 (MEAGGGKRAAPEGTNGAAKRARASESSQVGV) form a disordered region. 2 consecutive C3H1-type zinc fingers follow at residues 32 to 60 (GSKL…HNFP) and 98 to 126 (SVKT…HGER). Positions 166 to 230 (SATAKISVDA…DQIKHASAMV (65 aa)) constitute a KH domain. Residues 259–286 (NFKTKLCENFNKGSCTFGDRCHFAHGES) form a C3H1-type 3 zinc finger.

The polypeptide is Zinc finger CCCH domain-containing protein 44 (Oryza sativa subsp. japonica (Rice)).